A 267-amino-acid polypeptide reads, in one-letter code: Hydroxynaphthalene reductase-like protein Arp2 (267 aa).

Residues Ile25, Asn45, Asp71, and Asn98 each coordinate NADP(+). Residues Ser147 and Ser148 each act as proton donor in the active site. Residues Tyr162, Lys166, Val195, and Thr197 each contribute to the NADP(+) site. The Proton acceptor role is filled by Tyr162. Residue Lys166 is the Lowers pKa of active site Tyr of the active site.

The protein belongs to the short-chain dehydrogenases/reductases (SDR) family.

In terms of biological role, hydroxynaphthalene reductase-like protein; part of the Pks2 gene cluster that mediates the formation of infectious structures (appressoria), enabling these fungi to kill insects faster. The product of the Pks2 gene cluster is different from the one of Pks1 and has still not been identified. The chain is Hydroxynaphthalene reductase-like protein Arp2 from Metarhizium majus (strain ARSEF 297).